The primary structure comprises 585 residues: MLGRTLINKHGFLIHPRRFVHLNDKSLDGTFILPSKKNHMYDVPTNDLSGILNASDIDRINNLPFFDNTSPTKETNTKEGALLSEKLASVKELFGEDLENPSFINYRFPRGLENPYFDIQVNQLKKKRLSVTQLCTTQNWCELRNFYDFYSQNLSNQLLNLKFQVQKGKKIHKSLEDETHPELNQYKSFTHNFLALTKLSMDIDNDMDALLDNWFNSINRLVSLFTKGDGHAREIVCHGFINLEDGKLVEHLLNSDSKTKENVIISGVIDHLTLRNKHNHQVQKGAAHLDTEYQSWGNILTNLLSNLKELKSNNEIVISDIKTRSVPKIPSIESVIESSKLQTMYYKFFFSHLSQDMTQTYHSFLINAKRRGLDVDAPINPTKILTFILTNPLFANDVKNLLYGLPINHSAFDNDAKGSNTFDMAAFNDLLDRGPTSFNVPIEQDEDSSESTKCVSLRDYGHFYTKWKTPLTLKYFAARLSQIYFIVGNLVSNDLMIEYYYHNDNFHNIIFPYDTLKLGTHAHDSAMVWFGGRDMHPIEPTQKNFNTYCKFCDYRHVCSWKNKNELKLIDLGKELKKIILESSMK.

The N-terminal 26 residues, 1 to 26, are a transit peptide targeting the mitochondrion; sequence MLGRTLINKHGFLIHPRRFVHLNDKS. Positions 141, 549, 552, and 558 each coordinate [4Fe-4S] cluster.

Belongs to the EXO5 family. Monomer. Mg(2+) is required as a cofactor. It depends on [4Fe-4S] cluster as a cofactor.

It is found in the mitochondrion. In terms of biological role, single strand DNA specific 5' exonuclease involved in mitochondrial DNA replication and recombination. Releases dinucleotides as main products of catalysis. Has the capacity to slide across 5'double-stranded DNA or 5'RNA sequences and resumes cutting two nucleotides downstream of the double-stranded-to-single-stranded junction or RNA-to-DNA junction, respectively. In Saccharomyces cerevisiae (strain Lalvin EC1118 / Prise de mousse) (Baker's yeast), this protein is Exonuclease V, mitochondrial (EXO5).